Reading from the N-terminus, the 243-residue chain is MSPLKQFEIFPLIRLPEFFGWDINFTNSSLYMVLTVVFASLFLFAGVFRGKVIPGPMQSFVEIVCSFVLGIIKGSCGKAGSDYFPLILSVFLYVLFANLVGMLPLPMSFTVTSHIVVTLALAMVVFIFVTLIGLKKQGMGFFAMFLPDGTPNWIAPLMIFLEVCTYLFRPISLAIRLTANMIAGHTILKVIAGFVYPTSLLISPLSFLFVVVLIVFEVFIAMLQAYIFVMLTCVYLNDSLFKH.

The next 8 helical transmembrane spans lie at 28 to 48 (SSLYMVLTVVFASLFLFAGVF), 52 to 72 (VIPGPMQSFVEIVCSFVLGII), 83 to 103 (YFPLILSVFLYVLFANLVGML), 114 to 134 (HIVVTLALAMVVFIFVTLIGL), 141 to 161 (FFAMFLPDGTPNWIAPLMIFL), 177 to 197 (LTANMIAGHTILKVIAGFVYP), 200 to 220 (LLISPLSFLFVVVLIVFEVFI), and 221 to 241 (AMLQAYIFVMLTCVYLNDSLF).

Belongs to the ATPase A chain family. F-type ATPases have 2 components, CF(1) - the catalytic core - and CF(0) - the membrane proton channel. CF(1) has five subunits: alpha(3), beta(3), gamma(1), delta(1), epsilon(1). CF(0) has three main subunits: a(1), b(2) and c(9-12). The alpha and beta chains form an alternating ring which encloses part of the gamma chain. CF(1) is attached to CF(0) by a central stalk formed by the gamma and epsilon chains, while a peripheral stalk is formed by the delta and b chains.

The protein resides in the cell inner membrane. Its function is as follows. Key component of the proton channel; it plays a direct role in the translocation of protons across the membrane. The polypeptide is ATP synthase subunit a (Neorickettsia sennetsu (strain ATCC VR-367 / Miyayama) (Ehrlichia sennetsu)).